The chain runs to 171 residues: Ribosome maturation factor RimM (171 aa).

A PRC barrel domain is found at 97-170; sequence EGEYYYHEVI…QVTIHVMEGL (74 aa).

Belongs to the RimM family. As to quaternary structure, binds ribosomal protein uS19.

It is found in the cytoplasm. Its function is as follows. An accessory protein needed during the final step in the assembly of 30S ribosomal subunit, possibly for assembly of the head region. Essential for efficient processing of 16S rRNA. May be needed both before and after RbfA during the maturation of 16S rRNA. It has affinity for free ribosomal 30S subunits but not for 70S ribosomes. The polypeptide is Ribosome maturation factor RimM (Bacillus cytotoxicus (strain DSM 22905 / CIP 110041 / 391-98 / NVH 391-98)).